A 569-amino-acid polypeptide reads, in one-letter code: MDSSTATAMTAPFIDPTDHVNLKTDTDASENRRMGNYKPSIWNYDFLQSLATHHNIVEERHLKLAEKLKGQVKFMFGAPMEPLAKLELVDVVQRLGLNHLFETEIKEALFSIYKDGSNGWWFGHLHATSLRFRLLRQCGLFIPQDVFKTFQNKTGEFDMKLCDNVKGLLSLYEASYLGWKGENILDEAKAFTTKCLKSAWENISEKWLAKRVKHALALPLHWRVPRIEARWFIEAYEQEANMNPTLLKLAKLDFNMVQSIHQKEIGELARWWVTTGLDKLAFARNNLLQSYMWSCAIASDPKFKLARETIVEIGSVLTVVDDGYDVYGSIDELDLYTSSVERWSCVEIDKLPNTLKLIFMSMFNKTNEVGLRVQHERGYNSIPTFIKAWVEQCKSYQKEARWFHGGHTPPLEEYSLNGLVSIGFPLLLITGYVAIAENEAALDKVHPLPDLLHYSSLLSRLINDIGTSPDEMARGDNLKSIHCYMNETGASEEVAREHIKGVIEENWKILNQCCFDQSQFQEPFITFNLNSVRGSHFFYEFGDGFGVTDSWTKVDMKSVLIDPIPLGEE.

R284, D321, D325, and R460 together coordinate (2E)-geranyl diphosphate. Positions 321 and 325 each coordinate Mg(2+). Residues 321–325 (DDGYD) carry the DDXXD motif motif. Residues N463, T467, and E471 each contribute to the Mg(2+) site.

This sequence belongs to the terpene synthase family. Tpsb subfamily. The cofactor is Mg(2+). It depends on Mn(2+) as a cofactor.

It catalyses the reaction (2E,6E)-farnesyl diphosphate = (1S,5S,6R)-alpha-bergamotene + diphosphate. It carries out the reaction (2E,6E)-farnesyl diphosphate = (+)-alpha-santalene + diphosphate. The catalysed reaction is (2E,6E)-farnesyl diphosphate = (-)-beta-santalene + diphosphate. Catalyzes a mixture of sesquiterpenoids from (2E,6E)-farnesyl diphosphate in fragrance biosynthesis. Catalyzes the formation of alpha-santalene, beta-santalene, epi-beta-santalene and exo-alpha-bergamotene, as well as traces of alpha-farnesene and beta-farnesene. Also acts with (Z,Z)-farnesyl diphosphate isomer, producing alpha-endo-bergamotene, alpha-santalene, (Z)-beta-farnesene, epi-beta-santalene, and beta-santalene. The polypeptide is Santalene synthase (Santalum album (White sandalwood)).